Reading from the N-terminus, the 358-residue chain is Phosphoserine aminotransferase (358 aa).

Residue Arg-41 participates in L-glutamate binding. Residues 75-76, Trp-100, Thr-148, Asp-167, and Gln-190 each bind pyridoxal 5'-phosphate; that span reads AS. Lys-191 carries the post-translational modification N6-(pyridoxal phosphate)lysine. Residue 233-234 participates in pyridoxal 5'-phosphate binding; it reads NT.

The protein belongs to the class-V pyridoxal-phosphate-dependent aminotransferase family. SerC subfamily. In terms of assembly, homodimer. Pyridoxal 5'-phosphate is required as a cofactor.

Its subcellular location is the cytoplasm. The catalysed reaction is O-phospho-L-serine + 2-oxoglutarate = 3-phosphooxypyruvate + L-glutamate. The enzyme catalyses 4-(phosphooxy)-L-threonine + 2-oxoglutarate = (R)-3-hydroxy-2-oxo-4-phosphooxybutanoate + L-glutamate. It participates in amino-acid biosynthesis; L-serine biosynthesis; L-serine from 3-phospho-D-glycerate: step 2/3. The protein operates within cofactor biosynthesis; pyridoxine 5'-phosphate biosynthesis; pyridoxine 5'-phosphate from D-erythrose 4-phosphate: step 3/5. In terms of biological role, catalyzes the reversible conversion of 3-phosphohydroxypyruvate to phosphoserine and of 3-hydroxy-2-oxo-4-phosphonooxybutanoate to phosphohydroxythreonine. The protein is Phosphoserine aminotransferase of Campylobacter jejuni subsp. doylei (strain ATCC BAA-1458 / RM4099 / 269.97).